Here is a 216-residue protein sequence, read N- to C-terminus: Acetate CoA-transferase subunit beta (216 aa).

The active site involves Glu-46.

It belongs to the 3-oxoacid CoA-transferase subunit B family. Heterotetramer composed of two alpha subunits (AtoD) and two beta subunits (AtoA).

The protein localises to the cytoplasm. The catalysed reaction is an acyl-CoA + acetate = a carboxylate + acetyl-CoA. It catalyses the reaction acetoacetate + acetyl-CoA = acetoacetyl-CoA + acetate. The enzyme catalyses butanoate + acetyl-CoA = butanoyl-CoA + acetate. It carries out the reaction acetoacetate + butanoyl-CoA = acetoacetyl-CoA + butanoate. The protein operates within lipid metabolism; short-chain fatty acid metabolism. Inhibited by p-chloromercuribenzoate. Coenzyme A transferase which is involved in short-chain fatty acid degradation and catalyzes the activation of short-chain fatty acids to their respective CoA thiolesters. During acetoacetate degradation, catalyzes the transfer of CoA from acetyl-CoA to acetoacetate by a mechanism involving a covalent enzyme-CoA compound as a reaction intermediate. Utilizes a variety of short chain acyl-CoA and carboxylic acid substrates but exhibits maximal activity with normal and 3-keto substrates. This chain is Acetate CoA-transferase subunit beta, found in Escherichia coli (strain K12).